Reading from the N-terminus, the 361-residue chain is Chorismate synthase (361 aa).

2 residues coordinate NADP(+): arginine 48 and arginine 54. FMN contacts are provided by residues 125-127 (RSS), 238-239 (NA), glycine 278, 293-297 (KPTSS), and arginine 319.

This sequence belongs to the chorismate synthase family. Homotetramer. FMNH2 serves as cofactor.

The enzyme catalyses 5-O-(1-carboxyvinyl)-3-phosphoshikimate = chorismate + phosphate. The protein operates within metabolic intermediate biosynthesis; chorismate biosynthesis; chorismate from D-erythrose 4-phosphate and phosphoenolpyruvate: step 7/7. Its function is as follows. Catalyzes the anti-1,4-elimination of the C-3 phosphate and the C-6 proR hydrogen from 5-enolpyruvylshikimate-3-phosphate (EPSP) to yield chorismate, which is the branch point compound that serves as the starting substrate for the three terminal pathways of aromatic amino acid biosynthesis. This reaction introduces a second double bond into the aromatic ring system. The sequence is that of Chorismate synthase from Pectobacterium carotovorum subsp. carotovorum (strain PC1).